The sequence spans 195 residues: dTDP-4-dehydrorhamnose 3,5-epimerase (195 aa).

Substrate contacts are provided by residues arginine 31, glutamate 36, 54–56, and arginine 67; that span reads QDN. Histidine 70 serves as the catalytic Proton acceptor. Substrate is bound by residues lysine 80 and histidine 127. Tyrosine 140 acts as the Proton donor in catalysis. Positions 151 and 176 each coordinate substrate.

The protein belongs to the dTDP-4-dehydrorhamnose 3,5-epimerase family. As to quaternary structure, homodimer.

It carries out the reaction dTDP-4-dehydro-6-deoxy-alpha-D-glucose = dTDP-4-dehydro-beta-L-rhamnose. Its pathway is carbohydrate biosynthesis; dTDP-L-rhamnose biosynthesis. In terms of biological role, catalyzes the epimerization of the C3' and C5'positions of dTDP-6-deoxy-D-xylo-4-hexulose, forming dTDP-6-deoxy-L-lyxo-4-hexulose. This is dTDP-4-dehydrorhamnose 3,5-epimerase from Sinorhizobium fredii (strain NBRC 101917 / NGR234).